The sequence spans 847 residues: Pollen-specific leucine-rich repeat extensin-like protein 2 (847 aa).

An N-terminal signal peptide occupies residues 1–20; the sequence is MERPFGCFFILLLISYTVVA. 8 LRR repeats span residues 45 to 71, 106 to 130, 131 to 153, 155 to 178, 179 to 202, 204 to 224, 226 to 248, and 249 to 273; these read INKVDPNLKFENDRLKRAYIALQAWKK, LTVVAGVDLNHADIAGHLPPELGLM, TDLALFHINSNRFCGIIPKSLSK, ALMYEFDVSNNRFVGQFPEVSLSW, PSLKFLDLRYNEFEGSLPSEIFDK, LDAIFLNNNRFESVIPGTIGK, KASVVTFANNKFSGCIPKSIGNM, and KNLNEIVFTGNNLTGCFPNEIGLLN. Residues Asn-260 and Asn-274 are each glycosylated (N-linked (GlcNAc...) asparagine). LRR repeat units follow at residues 296–319 and 321–343; these read LASVEQLDLSHNKLTGFVVDKFCK and PNLDSFKFSYNFFNGEAESCVPG. Residues 381–847 are disordered; the sequence is KDKCSGGSNG…SPPPPMFQGY (467 aa). Positions 438 to 484 are enriched in basic and acidic residues; sequence PKHESPKPEEPENKHELPKQKESPKPQPSKPEDSPKPEQPKPEESPK. Composition is skewed to pro residues over residues 485-499 and 533-642; these read PEQPQIPEPTKPVSP and VPPP…PPPT. The tract at residues 522-847 is contains the Ser-Pro(4) repeats; that stretch reads SPPPPKVEDT…SPPPPMFQGY (326 aa). Composition is skewed to polar residues over residues 667–682, 688–720, and 726–752; these read QVPTPSSESDQSQILS, TPVQSSTPSSEPTQVPTPSSSESYQAPNLSPVQ, and QAPTTSSETSQVPTPSSESNQSPSQAP. 2 stretches are compositionally biased toward low complexity: residues 768–783 and 797–811; these read PVQSPTPSSEPVSSPE and NPSSVPSSSPSTDTS. The span at 838-847 shows a compositional bias: pro residues; the sequence is SPPPPMFQGY.

Post-translationally, hydroxylated on proline residues in the S-P-P-P-P repeat. In terms of processing, O-glycosylated on hydroxyprolines. As to expression, expressed in flowers, stamen, pollen, and pollinated carpels (at protein level).

The protein resides in the secreted. It is found in the cell wall. Modulates cell morphogenesis by regulating cell wall formation and assembly, and/or growth polarization. This is Pollen-specific leucine-rich repeat extensin-like protein 2 (PEX2) from Arabidopsis thaliana (Mouse-ear cress).